A 166-amino-acid polypeptide reads, in one-letter code: Urease accessory protein UreE (166 aa).

Residues 135–156 form a disordered region; it reads EQGAYGGGHHHSHHGDEEFNYG.

The protein belongs to the UreE family.

The protein localises to the cytoplasm. Involved in urease metallocenter assembly. Binds nickel. Probably functions as a nickel donor during metallocenter assembly. In Ectopseudomonas mendocina (strain ymp) (Pseudomonas mendocina), this protein is Urease accessory protein UreE.